The primary structure comprises 303 residues: Vesicle-trafficking protein SEC22c (303 aa).

Topologically, residues 1–183 (MSMILFASIV…EPAPNLRMKP (183 aa)) are cytoplasmic. The region spanning 8-119 (SIVRVRDGLP…YAFLEFDSVI (112 aa)) is the Longin domain. The helical transmembrane segment at 184-204 (VTALGVLSLVLNIMCAALNLI) threads the bilayer. The Lumenal segment spans residues 205–223 (RGVHLAEHSLQVAQEEVGN). Residues 224–244 (ILAFFIPSVACIVQCYLYLFY) traverse the membrane as a helical segment. Over 245–248 (SPAR) the chain is Cytoplasmic. A helical membrane pass occupies residues 249–269 (TLKVLLMLASICLGNAYLHGL). Arginine 270 is a topological domain (lumenal). A helical membrane pass occupies residues 271 to 291 (NTWQILFHVGVAFLSSYQILT). The Cytoplasmic segment spans residues 292–303 (RQLQERQSDYGV).

This sequence belongs to the synaptobrevin family.

The protein localises to the endoplasmic reticulum membrane. Functionally, may be involved in vesicle transport between the ER and the Golgi complex. The sequence is that of Vesicle-trafficking protein SEC22c (Sec22c) from Mus musculus (Mouse).